The chain runs to 125 residues: Outer membrane protein assembly factor BamE (125 aa).

The first 17 residues, 1–17 (MNKTLILALSALLGLAA), serve as a signal peptide directing secretion. Residue Cys-18 is the site of N-palmitoyl cysteine attachment. Cys-18 carries S-diacylglycerol cysteine lipidation.

Belongs to the BamE family. In terms of assembly, part of the Bam complex.

The protein localises to the cell outer membrane. Part of the outer membrane protein assembly complex, which is involved in assembly and insertion of beta-barrel proteins into the outer membrane. The protein is Outer membrane protein assembly factor BamE of Neisseria meningitidis serogroup B (strain ATCC BAA-335 / MC58).